A 295-amino-acid chain; its full sequence is GATA transcription factor 18 (295 aa).

The GATA-type zinc finger occupies 148-202; that stretch reads SLLARRCANCDTTSTPLWRNGPRGPKSLCNACGIRFKKEERRTTAATGNTVVGAA.

This sequence belongs to the type IV zinc-finger family. Class B subfamily. In terms of assembly, homodimer. Forms heterodimers with GATA19, GATA22 and GATA21. Interacts with JAG. Binds to AGO10/PNH. As to expression, expressed in vegetative and inflorescence shoot apical meristems (SAMs), axillary (SAMs), floral meristems, developing ovules and stamens, vascular tissues, and in the embryo.

The protein localises to the nucleus. Functionally, transcriptional factor that specifically binds 5'-GATA-3' or 5'-GAT-3' motifs within gene promoters (including its own promoter and GATA21 promoter), thus regulating the expression of genes mostly involved in hormone responses and floral organ specification (including genes regulating hormones responses). Regulates both flower and shoot apical meristem (SAM) development, especially for establishing organ boundaries in shoots and flowers, probably by controlling the number and position of WUS-expressing cells. Coregulates, with AGO10/PNH, the shoot apical meristem (SAM) organization. Regulates floral organ development via the promotion of JAG and NPR5/BOP2 expression. Modulates cytokinin homeostasis in organ boundaries by regulating CKX3 expression. Involved in cell proliferation and differentiation. Required to position the inductive proembryo boundary via the regulation of gene expression and for early embryonic development. Together with GIF1/AN3, mediates cotyledon identity by preventing ectopic root formation through the repression of PLT1 expression. The protein is GATA transcription factor 18 of Arabidopsis thaliana (Mouse-ear cress).